Consider the following 616-residue polypeptide: Chaperone protein HscA (616 aa).

This sequence belongs to the heat shock protein 70 family.

Chaperone involved in the maturation of iron-sulfur cluster-containing proteins. Has a low intrinsic ATPase activity which is markedly stimulated by HscB. Involved in the maturation of IscU. The protein is Chaperone protein HscA of Klebsiella pneumoniae subsp. pneumoniae (strain ATCC 700721 / MGH 78578).